A 51-amino-acid polypeptide reads, in one-letter code: Large ribosomal subunit protein eL39 (51 aa).

Belongs to the eukaryotic ribosomal protein eL39 family. In terms of assembly, component of the large ribosomal subunit. Interacts with IMPACT.

It is found in the cytoplasm. Its function is as follows. RNA-binding component of the large ribosomal subunit. The ribosome is a large ribonucleoprotein complex responsible for the synthesis of proteins in the cell. This Mus musculus (Mouse) protein is Large ribosomal subunit protein eL39 (Rpl39).